We begin with the raw amino-acid sequence, 474 residues long: Glutamate--tRNA ligase (474 aa).

Residues 9-19 (PSPTGYLHVGG) carry the 'HIGH' region motif. The 'KMSKS' region motif lies at 240–244 (KLSKR). K243 contributes to the ATP binding site.

Belongs to the class-I aminoacyl-tRNA synthetase family. Glutamate--tRNA ligase type 1 subfamily. In terms of assembly, monomer.

Its subcellular location is the cytoplasm. The catalysed reaction is tRNA(Glu) + L-glutamate + ATP = L-glutamyl-tRNA(Glu) + AMP + diphosphate. Catalyzes the attachment of glutamate to tRNA(Glu) in a two-step reaction: glutamate is first activated by ATP to form Glu-AMP and then transferred to the acceptor end of tRNA(Glu). This chain is Glutamate--tRNA ligase, found in Aliivibrio fischeri (strain MJ11) (Vibrio fischeri).